A 355-amino-acid chain; its full sequence is Magnesium-chelatase subunit ChlI (355 aa).

46-53 (GDRGTGKS) contacts ATP. Cys281 and Cys323 are disulfide-bonded.

This sequence belongs to the Mg-chelatase subunits D/I family. In terms of assembly, the magnesium chelatase complex is a heterotrimer consisting of subunits CHLI, CHLD and CHLH.

It is found in the plastid. Its subcellular location is the chloroplast. It catalyses the reaction protoporphyrin IX + Mg(2+) + ATP + H2O = Mg-protoporphyrin IX + ADP + phosphate + 3 H(+). It functions in the pathway porphyrin-containing compound metabolism; chlorophyll biosynthesis. Its activity is regulated as follows. Redox regulation; active in reducing conditions, inactive in oxidizing conditions. Thioredoxins f and m mediate the reversible reductive activation of oxidized CHLI. In terms of biological role, involved in chlorophyll biosynthesis. Catalyzes the insertion of magnesium ion into protoporphyrin IX to yield Mg-protoporphyrin IX. The magnesium-chelatase is a complex of three subunits, CHLI, CHLD and CHLH. The reaction takes place in two steps, with an ATP-dependent activation followed by an ATP-dependent chelation step. The sequence is that of Magnesium-chelatase subunit ChlI (chlI) from Nephroselmis olivacea (Green alga).